Reading from the N-terminus, the 174-residue chain is Ribosome maturation factor RimM (174 aa).

In terms of domain architecture, PRC barrel spans 97-171 (SDGEYYWCDL…RMTVSLPEGL (75 aa)).

Belongs to the RimM family. Binds ribosomal protein uS19.

The protein resides in the cytoplasm. Its function is as follows. An accessory protein needed during the final step in the assembly of 30S ribosomal subunit, possibly for assembly of the head region. Essential for efficient processing of 16S rRNA. May be needed both before and after RbfA during the maturation of 16S rRNA. It has affinity for free ribosomal 30S subunits but not for 70S ribosomes. The sequence is that of Ribosome maturation factor RimM from Geotalea daltonii (strain DSM 22248 / JCM 15807 / FRC-32) (Geobacter daltonii).